The following is a 176-amino-acid chain: Protein CURLY FLAG LEAF 2 (176 aa).

The short motif at 41–46 (FLELSS) is the EAR element. The 35-residue stretch at 48–82 (FSVPSHLEQCLDLKTGEIYYRSWNSGMRVKEDPRK) folds into the WW domain. 2 disordered regions span residues 77-106 (KEDP…SSEE) and 111-130 (YESE…YHKE). Residues 93 to 106 (SSGESSGTVFSSEE) show a composition bias toward low complexity.

In terms of assembly, may interact with BHLH122/CFLAP1 and BHLH80/CFLAP2.

May negatively regulate the cuticle development by interacting with the HD-ZIP IV transcription factor HDG1. This is Protein CURLY FLAG LEAF 2 from Arabidopsis thaliana (Mouse-ear cress).